The sequence spans 309 residues: Cyclin-dependent kinase B1-1 (309 aa).

In terms of domain architecture, Protein kinase spans 4–301 (YEKLEKVGEG…AKTALDHPYF (298 aa)). ATP contacts are provided by residues 10–18 (VGEGTYGKV) and Lys-33. The residue at position 15 (Tyr-15) is a Phosphotyrosine. Catalysis depends on Asp-142, which acts as the Proton acceptor. At Thr-176 the chain carries Phosphothreonine; by CAK.

The protein belongs to the protein kinase superfamily. CMGC Ser/Thr protein kinase family. CDC2/CDKX subfamily. As to quaternary structure, interacts with CKS1. Interacts with CYCU3-1. Interacts with SIM, SMR1 and SMR2. In terms of tissue distribution, highly expressed in guard cells and stomatal precursor cells of cotyledons. Expressed in roots, stems, flowers and siliques.

The protein resides in the nucleus. The catalysed reaction is L-seryl-[protein] + ATP = O-phospho-L-seryl-[protein] + ADP + H(+). It catalyses the reaction L-threonyl-[protein] + ATP = O-phospho-L-threonyl-[protein] + ADP + H(+). It carries out the reaction [DNA-directed RNA polymerase] + ATP = phospho-[DNA-directed RNA polymerase] + ADP + H(+). With respect to regulation, phosphorylation at Thr-14 or Tyr-15 inactivates the enzyme, while phosphorylation at Thr-176 activates it. Functionally, may control G2/M (mitosis) phase progression. Plays a role in regulating seedling growth in darkness via regulation of hypocotyl cell elongation and cotyledon cell development. Plays a role in stomatal development. Required to suppress endoreduplication. Together with CDKB1-2, promotes both the last division in the stomatal cell lineage as well as the number of stomata. In collaboration with MYB124 and MYB88, restrict the G1/S transition and chloroplast and nuclear number during stomatal formation, and normally maintain fate and developmental progression throughout the stomatal cell lineage. The chain is Cyclin-dependent kinase B1-1 (CDKB1-1) from Arabidopsis thaliana (Mouse-ear cress).